A 493-amino-acid polypeptide reads, in one-letter code: Cysteine--tRNA ligase (493 aa).

Cys-29 contacts Zn(2+). The short motif at 31–41 (VTVYDLCHLGH) is the 'HIGH' region element. 3 residues coordinate Zn(2+): Cys-213, His-238, and Glu-242. The short motif at 270-274 (KMSKS) is the 'KMSKS' region element. ATP is bound at residue Lys-273.

Belongs to the class-I aminoacyl-tRNA synthetase family. In terms of assembly, monomer. Requires Zn(2+) as cofactor.

The protein resides in the cytoplasm. The enzyme catalyses tRNA(Cys) + L-cysteine + ATP = L-cysteinyl-tRNA(Cys) + AMP + diphosphate. The protein is Cysteine--tRNA ligase of Parasynechococcus marenigrum (strain WH8102).